The following is a 1141-amino-acid chain: Sterol regulatory element-binding protein 2 (1141 aa).

A transcriptional activation (acidic) region spans residues methionine 1–leucine 50. At methionine 1–arginine 479 the chain is on the cytoplasmic side. Residues glutamate 48–glutamine 144 form a disordered region. Residues serine 63–glycine 82 are compositionally biased toward low complexity. Over residues valine 88–leucine 97 the composition is skewed to polar residues. A compositionally biased stretch (low complexity) spans proline 98 to proline 110. The span at valine 114–arginine 126 shows a compositional bias: polar residues. An interaction with LMNA region spans residues glutamine 237–cysteine 491. A bHLH domain is found at glutamate 330–leucine 380. A leucine-zipper region spans residues leucine 380–asparagine 401. Lysine 464 participates in a covalent cross-link: Glycyl lysine isopeptide (Lys-Gly) (interchain with G-Cter in SUMO2). The helical transmembrane segment at serine 480–leucine 500 threads the bilayer. Residues leucine 501 to aspartate 533 are Lumenal-facing. Residues tryptophan 534–valine 554 form a helical membrane-spanning segment. Over lysine 555–alanine 1139 the chain is Cytoplasmic. Phosphoserine is present on residues serine 855 and serine 1098.

Belongs to the SREBP family. Forms a tight complex with SCAP, the SCAP-SREBP complex, in the endoplasmic reticulum membrane and the Golgi apparatus. Interacts with PAQR3; the interaction anchors the SCAP-SREBP complex to the Golgi apparatus in low cholesterol conditions. Interacts (via C-terminal domain) with RNF139. In terms of assembly, homodimer; efficient DNA binding of the soluble transcription factor fragment requires dimerization with another bHLH protein. Interacts with LMNA. In terms of processing, processed in the Golgi apparatus, releasing the protein from the membrane. At low cholesterol the SCAP-SREBP complex is recruited into COPII vesicles for export from the endoplasmic reticulum. In the Golgi, complex SREBPs are cleaved sequentially by site-1 (MBTPS1, S1P) and site-2 (MBTPS2, S2P) protease. The first cleavage by site-1 protease occurs within the luminal loop, the second cleavage by site-2 protease occurs within the first transmembrane domain, releasing the transcription factor from the Golgi membrane. Apoptosis triggers cleavage by the cysteine proteases caspase-3 and caspase-7. Cleavage and activation is induced by mediated cholesterol efflux. Phosphorylated by AMPK, leading to suppress protein processing and nuclear translocation, and repress target gene expression. Post-translationally, SCAP-free SREBF2 is ubiquitinated by the BCR(ARMC5) complex, leading to its degradation. In terms of processing, ubiquitinated; the nuclear form has a rapid turnover and is rapidly ubiquitinated and degraded by the proteasome in the nucleus. As to expression, ubiquitously expressed in adult and fetal tissues.

The protein resides in the endoplasmic reticulum membrane. The protein localises to the golgi apparatus membrane. It localises to the cytoplasmic vesicle. It is found in the COPII-coated vesicle membrane. Its subcellular location is the nucleus. With respect to regulation, activation by cleavage is down-regulated upon activation of SIRT3-dependent PRKAA1/AMPK-alpha signaling cascade which leads to inhibition of ATP-consuming lipogenesis to restore cellular energy balance. Precursor of the transcription factor form (Processed sterol regulatory element-binding protein 2), which is embedded in the endoplasmic reticulum membrane. Low sterol concentrations promote processing of this form, releasing the transcription factor form that translocates into the nucleus and activates transcription of genes involved in cholesterol biosynthesis. Functionally, key transcription factor that regulates expression of genes involved in cholesterol biosynthesis. Binds to the sterol regulatory element 1 (SRE-1) (5'-ATCACCCCAC-3'). Has dual sequence specificity binding to both an E-box motif (5'-ATCACGTGA-3') and to SRE-1 (5'-ATCACCCCAC-3'). Regulates transcription of genes related to cholesterol synthesis pathway. This Homo sapiens (Human) protein is Sterol regulatory element-binding protein 2.